Consider the following 542-residue polypeptide: Chitinase 2 (542 aa).

The first 22 residues, 1–22 (MLTRTFLGMAISAFLASTGVQA), serve as a signal peptide directing secretion. In terms of domain architecture, GH18 spans 29–314 (PNVMYYWGQN…SQLYSLVHSG (286 aa)). Glu-166 functions as the Proton donor in the catalytic mechanism. The disordered stretch occupies residues 312–356 (HSGGSTPPPPSSSSATKTTTKTTATSTKTTTTTAPTATSTPGSCP). The span at 323 to 354 (SSSATKTTTKTTATSTKTTTTTAPTATSTPGS) shows a compositional bias: low complexity. The interval 355 to 406 (CPVANQPCSTQNQYACTADGKYAVCDHGKWVASSCPSNTVCIPTTDGASIYC) is chitin-binding, high affinity. The propeptide occupies 447 to 542 (AQLAVTSTDK…APSTSAWNFK (96 aa)).

It belongs to the glycosyl hydrolase 18 family. Chitinase class III subfamily. As to quaternary structure, monomer. O-glycosylated.

Its subcellular location is the secreted. It carries out the reaction Random endo-hydrolysis of N-acetyl-beta-D-glucosaminide (1-&gt;4)-beta-linkages in chitin and chitodextrins.. Its function is as follows. Probably involved in the apical growth and branching of fungal hyphae. The sequence is that of Chitinase 2 (CHI2) from Rhizopus oligosporus (Rhizopus microsporus var. oligosporus).